The sequence spans 586 residues: Acyl-coenzyme A synthetase ACSM3, mitochondrial (586 aa).

The transit peptide at 1-27 (MLACVTMKMLRHAKCFQRLAIFGSVRA) directs the protein to the mitochondrion. Residues lysine 73 and lysine 106 each carry the N6-succinyllysine modification. Position 157 is an N6-acetyllysine (lysine 157). ATP-binding positions include 235–243 (TSGTSGYPK), 374–379 (EGYGQT), aspartate 461, arginine 476, and lysine 572.

This sequence belongs to the ATP-dependent AMP-binding enzyme family. The cofactor is Mg(2+). Requires Mn(2+) as cofactor.

The protein localises to the mitochondrion. It is found in the mitochondrion matrix. The catalysed reaction is a medium-chain fatty acid + ATP + CoA = a medium-chain fatty acyl-CoA + AMP + diphosphate. It catalyses the reaction propanoate + ATP + CoA = propanoyl-CoA + AMP + diphosphate. The enzyme catalyses butanoate + ATP + CoA = butanoyl-CoA + AMP + diphosphate. It carries out the reaction 2-methylpropanoate + ATP + CoA = 2-methylpropanoyl-CoA + AMP + diphosphate. The catalysed reaction is 2-methylbutanoate + ATP + CoA = 2-methylbutanoyl-CoA + AMP + diphosphate. It catalyses the reaction octanoate + ATP + CoA = octanoyl-CoA + AMP + diphosphate. Functionally, catalyzes the activation of fatty acids by CoA to produce an acyl-CoA, the first step in fatty acid metabolism. Capable of activating medium-chain fatty acids with a preference for isobutyrate among fatty acids with 2-6 carbon atoms. The sequence is that of Acyl-coenzyme A synthetase ACSM3, mitochondrial (ACSM3) from Pongo abelii (Sumatran orangutan).